The following is a 354-amino-acid chain: Lysophosphatidic acid receptor 3 (354 aa).

Residues 1 to 31 (MNECHYDKRMDFFYNRSNTDTADEWTGTKLV) lie on the Extracellular side of the membrane. Residue N15 is glycosylated (N-linked (GlcNAc...) asparagine). A helical membrane pass occupies residues 32-52 (IVLCVGTFFCLFIFFSNSLVI). The Cytoplasmic portion of the chain corresponds to 53–67 (AAVITNRKFHFPFYY). A helical membrane pass occupies residues 68–88 (LLANLAAADFFAGIAYVFLMF). Residues 89-101 (NTGPVSKTLTVNR) are Extracellular-facing. Residues 102 to 124 (WLLRQGLLDTSLTASLANLLVIA) form a helical membrane-spanning segment. The Cytoplasmic segment spans residues 125–146 (VERHMSIMRMRIHSNLTKKRVT). Residues 147–167 (LLILLVWAIAIFMGAVPTLGW) traverse the membrane as a helical segment. Over 168–186 (NCLCNISACSSLAPIYSRS) the chain is Extracellular. N172 carries N-linked (GlcNAc...) asparagine glycosylation. A helical membrane pass occupies residues 187-207 (YLIFWTVSNLLAFFIMVVVYV). The Cytoplasmic portion of the chain corresponds to 208–240 (RIYMYVKRKTNVLSPHTSGSISRRRAPMKLMKT). Residues 241-261 (VMTVLGAFVVCWTPGLVVLLL) traverse the membrane as a helical segment. Residues 262-276 (DGLNCKQCNVQHVKR) lie on the Extracellular side of the membrane. The chain crosses the membrane as a helical span at residues 277 to 295 (WFLLLALLNSVMNPIIYSY). Residues 296 to 354 (KDEDMYNTMRKMICCAPHDSNAERHPSRIPSTIHSRSDTGSQYLEDSISQGQVCNKSSS) lie on the Cytoplasmic side of the membrane. Residue C309 is the site of S-palmitoyl cysteine attachment.

This sequence belongs to the G-protein coupled receptor 1 family.

It localises to the cell membrane. In terms of biological role, receptor for lysophosphatidic acid (LPA), a mediator of diverse cellular activities. Seems to be coupled to the G(i)/G(o) and G(q) families of heteromeric G proteins. The sequence is that of Lysophosphatidic acid receptor 3 (Lpar3) from Rattus norvegicus (Rat).